We begin with the raw amino-acid sequence, 143 residues long: Cytochrome c-type biogenesis protein CcmE (143 aa).

Residues 1 to 8 (MNPVRRRK) are Cytoplasmic-facing. The helical; Signal-anchor for type II membrane protein transmembrane segment at 9 to 29 (LFILLFALTILSAAAALVLYA) threads the bilayer. Over 30-143 (LRQNISLFYT…KSALADKVKQ (114 aa)) the chain is Periplasmic. Positions 124 and 128 each coordinate heme.

Belongs to the CcmE/CycJ family.

It localises to the cell inner membrane. Heme chaperone required for the biogenesis of c-type cytochromes. Transiently binds heme delivered by CcmC and transfers the heme to apo-cytochromes in a process facilitated by CcmF and CcmH. The sequence is that of Cytochrome c-type biogenesis protein CcmE from Legionella pneumophila (strain Corby).